The following is a 258-amino-acid chain: MSSIDPRAIIDPSAKLAEGVEVGPWSIVGPDVEIGEGTVIGPHVVLKGPTRIGKHNRIYQFSSIGEDTPDMKYKGEPTRLVMGDHNVIREGVTIHRGTIQDRSETTLGDHNLIMAYAHIGHDSVIGNHCILVNNTALAGHVHVGDWAILSGYTLVHQYCHIGAHAFSGMGTAIGKDVPAYVTVFGSPAEARSMNFEGLRRRGFSDEVLHALRRAYKIVYRQGLTVEQAMKELDELVAQFPEVELFRQSIANSARGITR.

This sequence belongs to the transferase hexapeptide repeat family. LpxA subfamily. Homotrimer.

The protein localises to the cytoplasm. It carries out the reaction a (3R)-hydroxyacyl-[ACP] + UDP-N-acetyl-alpha-D-glucosamine = a UDP-3-O-[(3R)-3-hydroxyacyl]-N-acetyl-alpha-D-glucosamine + holo-[ACP]. It functions in the pathway glycolipid biosynthesis; lipid IV(A) biosynthesis; lipid IV(A) from (3R)-3-hydroxytetradecanoyl-[acyl-carrier-protein] and UDP-N-acetyl-alpha-D-glucosamine: step 1/6. Its function is as follows. Involved in the biosynthesis of lipid A, a phosphorylated glycolipid that anchors the lipopolysaccharide to the outer membrane of the cell. The protein is Acyl-[acyl-carrier-protein]--UDP-N-acetylglucosamine O-acyltransferase of Pseudomonas entomophila (strain L48).